Here is a 556-residue protein sequence, read N- to C-terminus: 2-succinyl-5-enolpyruvyl-6-hydroxy-3-cyclohexene-1-carboxylate synthase (556 aa).

This sequence belongs to the TPP enzyme family. MenD subfamily. Homodimer. Mg(2+) is required as a cofactor. It depends on Mn(2+) as a cofactor. The cofactor is thiamine diphosphate.

The enzyme catalyses isochorismate + 2-oxoglutarate + H(+) = 5-enolpyruvoyl-6-hydroxy-2-succinyl-cyclohex-3-ene-1-carboxylate + CO2. Its pathway is quinol/quinone metabolism; 1,4-dihydroxy-2-naphthoate biosynthesis; 1,4-dihydroxy-2-naphthoate from chorismate: step 2/7. The protein operates within quinol/quinone metabolism; menaquinone biosynthesis. Its function is as follows. Catalyzes the thiamine diphosphate-dependent decarboxylation of 2-oxoglutarate and the subsequent addition of the resulting succinic semialdehyde-thiamine pyrophosphate anion to isochorismate to yield 2-succinyl-5-enolpyruvyl-6-hydroxy-3-cyclohexene-1-carboxylate (SEPHCHC). This chain is 2-succinyl-5-enolpyruvyl-6-hydroxy-3-cyclohexene-1-carboxylate synthase, found in Escherichia coli (strain ATCC 8739 / DSM 1576 / NBRC 3972 / NCIMB 8545 / WDCM 00012 / Crooks).